The primary structure comprises 142 residues: Prefoldin subunit alpha (142 aa).

This sequence belongs to the prefoldin subunit alpha family. In terms of assembly, heterohexamer of two alpha and four beta subunits.

It is found in the cytoplasm. Molecular chaperone capable of stabilizing a range of proteins. Seems to fulfill an ATP-independent, HSP70-like function in archaeal de novo protein folding. The protein is Prefoldin subunit alpha of Methanosarcina mazei (strain ATCC BAA-159 / DSM 3647 / Goe1 / Go1 / JCM 11833 / OCM 88) (Methanosarcina frisia).